The following is a 608-amino-acid chain: ESX-3 secretion system protein EccA3 (608 aa).

The segment at 284–303 (EARSDPWDPETEPSEAEFVD) is disordered. A compositionally biased stretch (acidic residues) spans 290-301 (WDPETEPSEAEF). An ATP-binding site is contributed by 365 to 372 (GPPGTGKT).

It belongs to the CbxX/CfxQ family. Part of the ESX-3 / type VII secretion system (T7SS), which is composed of cytosolic and membrane components.

It is found in the cytoplasm. Part of the ESX-3 specialized secretion system, which is required for siderophore-mediated iron acquisition and for the secretion of EsxH and EsxG. EccA3 exhibits ATPase activity and may provide energy for the export of ESX-3 substrates. This Mycolicibacterium smegmatis (strain ATCC 700084 / mc(2)155) (Mycobacterium smegmatis) protein is ESX-3 secretion system protein EccA3.